The chain runs to 4074 residues: Fibrocystin (4074 aa).

The N-terminal stretch at 1–22 (MIVWLISLMSIEILLLAGPALS) is a signal peptide. N-linked (GlcNAc...) asparagine glycans are attached at residues Asn-54 and Asn-224. The IPT/TIG 1 domain occupies 258–310 (EILSVFPETGSLGGKTDIIITGDFFDNPALVTIAGVPCDIRHMSPRKIECTTR). In terms of domain architecture, PA14 spans 323 to 483 (AGNRGLLFEV…TWLNPDVVST (161 aa)). N-linked (GlcNAc...) asparagine glycans are attached at residues Asn-355, Asn-385, Asn-518, Asn-527, Asn-640, Asn-710, Asn-741, Asn-822, Asn-829, Asn-868, Asn-953, Asn-966, Asn-976, Asn-1006, Asn-1059, Asn-1083, Asn-1115, Asn-1134, Asn-1233, Asn-1240, Asn-1274, Asn-1284, Asn-1308, Asn-1319, Asn-1342, Asn-1373, Asn-1445, Asn-1456, Asn-1471, Asn-1490, Asn-1528, Asn-1560, Asn-1578, Asn-1598, Asn-1627, Asn-1694, Asn-1760, Asn-1775, Asn-1789, Asn-1875, Asn-1915, Asn-1941, Asn-1955, Asn-2030, Asn-2111, and Asn-2140. An IPT/TIG 2 domain is found at 944–1000 (SLLIYIFGINFSGDPQALEIMVNKTNCKVIFSNQTNVICQTDLLPVGMHRLFMVVRP). 3 IPT/TIG domains span residues 1018-1101 (PRLD…AFTY), 1107-1186 (PVIT…RSPG), and 1199-1274 (SIEP…WAGN). An IPT/TIG 6 domain is found at 1385 to 1464 (PWIMAISPTH…LNVTVIVNGL (80 aa)). An IPT/TIG 7 domain is found at 1573–1641 (HYFPKNFSIH…LVIEVDGLSY (69 aa)). In terms of domain architecture, G8 1 spans 1928–2049 (HSWFPERVPQ…PEVTFTHLQA (122 aa)). PbH1 repeat units follow at residues 2245-2267 (TLGLKVDSNIFYNILGHALLVGT), 2288-2322 (EQGNIIRNNVIISISGTEGLSSPEMLTPSGIYILN), 2351-2373 (APLLSFTQNIAHSCTRYGLFIYP), 2383-2404 (RGPTLFQNFTVWGSAGGARISR), and 2405-2427 (SSNLHLKNFQVYSCRDFGIDILE). The N-linked (GlcNAc...) asparagine glycan is linked to Asn-2390. Asn-2431, Asn-2467, Asn-2531, Asn-2549, Asn-2579, Asn-2591, Asn-2749, Asn-2764, Asn-2972, and Asn-3004 each carry an N-linked (GlcNAc...) asparagine glycan. One copy of the PbH1 6 repeat lies at 2460 to 2483 (RWELIISNTTFVNFDLTDCVSIRT). Residues 2743-2869 (EGWGGHNHTI…PKKSWTRLAA (127 aa)) form the G8 2 domain. A PbH1 7 repeat occupies 3029–3051 (SHGIILNDNIVFGTVGHGIDLEG). Asn-3053 carries N-linked (GlcNAc...) asparagine glycosylation. A PbH1 8 repeat occupies 3082–3104 (AKDINLYGNVVAGSERIGFHIQG). Residues Asn-3136, Asn-3165, Asn-3221, Asn-3484, Asn-3702, Asn-3721, and Asn-3833 are each glycosylated (N-linked (GlcNAc...) asparagine). One copy of the PbH1 9 repeat lies at 3158-3183 (ENSVEIENITLVDNSIGLLATVYVSS). The helical transmembrane segment at 3854–3874 (IILAVSLCSVASWLALCCLVC) threads the bilayer. Residues 3871 to 3888 (CLVCCWFRKSKSRKIKSE) are ciliary targeting sequence (CST). Disordered stretches follow at residues 3896–3919 (NDQKSHIHMSSKHPRSQETKKEDT), 3943–3965 (NGVSRRKVSRRAVREEGSSREED), and 4031–4074 (LQGQ…QEQL). 2 stretches are compositionally biased toward basic and acidic residues: residues 3910–3919 (RSQETKKEDT) and 3954–3965 (AVREEGSSREED). The interval 3947 to 3976 (RRKVSRRAVREEGSSREEDVVPAPRIISIT) is nuclear localization signal (NLS).

In terms of assembly, interacts with CAMLG. Interacts with PKD2. Interacts (via CST) with ARF4; this interaction allows an efficient PKHD1 trafficking to the cilium. Interacts (via CST) with RAB8A; this interaction controls trafficking through the endomembrane systeme and to the cilium. Interacts (via CST) with TULP3; this interaction allows PKHD1 trafficking to the cilium. In terms of processing, palmitoylated. Palmitoylation facilitates the trafficking to the cilia and membrane targeting. N-glycosylated. Post-translationally, several proteolytic cleavages occur within the extracellular domain, whereas at least one cleavage occurs within the cytoplasmic domain. Cleaved by a probable proprotein convertase which produces an extracellular domain (polyductin extracellular domain, (PECD)) and a C-terminal fragment (polyductin transmembrane fragment (PTM)) which are tethered together by disulfide bonds. This extracellular domain (PECD) is then shed from the primary cilium by activation of a member of the ADAM metalloproteinase disintegrins family, resulting in concomitant release of an intra-cellular C-terminal fragment (ICD) via a gamma-secretase-dependent process. The proteolytic cleavage of the C-terminal intracellular fragment (ICD) is controlled by cytosolic calcium concentration and activation of PKC.

The protein localises to the cell membrane. It is found in the cytoplasm. Its subcellular location is the apical cell membrane. The protein resides in the cytoskeleton. It localises to the cilium basal body. The protein localises to the cell projection. It is found in the cilium. Its subcellular location is the spindle. The protein resides in the chromosome. It localises to the centromere. The protein localises to the nucleus. It is found in the secreted. Its subcellular location is the extracellular exosome. The protein resides in the endoplasmic reticulum. It localises to the golgi apparatus. In terms of biological role, promotes ciliogenesis in renal epithelial cells and therefore participates in the tubules formation and/ or ensures the maintenance of the architecture of the lumen of the kidney. Has an impact on cellular symmetry by ensuring correct bipolar cell division through the regulation of centrosome duplication and mitotic spindle assembly and by maintaining oriented cell division (OCD) during tubular elongation through planar cell polarity (PCP) pathway. During epithelial cell morphogenesis, it also regulates cell-cell and cell-matrix adhesion and participates in cell motility. Promotes cell-cell contact through the positive regulation of PTK2 kinase activity leading to either positive regulation of epithelial cell proliferation through the HRAS/RAF1 pathways, or negative regulation of apoptosis through the PDK1/AKT1 pathway. May act in collecting-duct and biliary differentiation. May participate in the regulation of the cholangiocytes proliferation and the CCN2 production in an CXCL8-dependent manner. This is Fibrocystin from Canis lupus familiaris (Dog).